Consider the following 84-residue polypeptide: MKVTLIAIPTCAAVLVLHTTAAEELEESQLMEVGMPDTELAAVDEERLFECSVSCEIEKEGNKDCKKKKCKGGWKCKFNMCVKV.

The N-terminal stretch at 1-22 is a signal peptide; the sequence is MKVTLIAIPTCAAVLVLHTTAA. A propeptide spanning residues 23-47 is cleaved from the precursor; it reads EELEESQLMEVGMPDTELAAVDEER. 3 cysteine pairs are disulfide-bonded: cysteine 51-cysteine 65, cysteine 55-cysteine 76, and cysteine 70-cysteine 81.

This sequence belongs to the neurotoxin 12 (Hwtx-2) family. 02 (Hwtx-2) subfamily. As to expression, expressed by the venom gland.

It is found in the secreted. Postsynaptic neurotoxin. This Cyriopagopus hainanus (Chinese bird spider) protein is U4-theraphotoxin-Hhn1a.